Reading from the N-terminus, the 432-residue chain is MSTFGHYFRVTTYGESHCKSVGCIVDGVPPGMELTEDDIQPQMTRRRPGQSAITTPRDEKDRVIIQSGTEFGVTLGTPIGMLVMNEDQRPKDYGNKTMDIYPRPSHADWTYLEKYGVKASSGGGRSSARETIGRVAAGAIAEKYLKLAYGVEIVAFVSSVGSEHLFPPTAEHPSPSTNPEFLKLVNSITRETVDSFLPVRCPDAEANKRMEDLITKFRDNHDSIGGTVTCVIRNVPSGLGEPAFDKLEAMLAHAMLSIPATKGFEVGSGFGGCEVPGSIHNDPFVSAENTEIPPSVAASGAARNGIPRPKLTTKTNFSGGIQGGISNGAPIYFRVGFKPAATIGQEQTTATYDGTSEGVLAAKGRHDPSVVPRAVPIVEAMAALVIMDAVLAQQARHTAKSLLPPLKQTINSGKDTVGNGVSENVQESDLAQ.

Active-site residues include histidine 17, histidine 106, and aspartate 367. A disordered region spans residues 406 to 432 (LKQTINSGKDTVGNGVSENVQESDLAQ). The span at 408–432 (QTINSGKDTVGNGVSENVQESDLAQ) shows a compositional bias: polar residues.

It belongs to the chorismate synthase family. In terms of assembly, homotetramer.

It carries out the reaction 5-O-(1-carboxyvinyl)-3-phosphoshikimate = chorismate + phosphate. The catalysed reaction is FMNH2 + NADP(+) = FMN + NADPH + 2 H(+). The protein operates within metabolic intermediate biosynthesis; chorismate biosynthesis; chorismate from D-erythrose 4-phosphate and phosphoenolpyruvate: step 7/7. Functionally, bifunctional chorismate synthase and flavin reductase that catalyzes the conversion of 5-enolpyruvylshikimate 3-phosphate (EPSP) to form chorismate, which is the last common intermediate in the synthesis of the three aromatic amino acids phenylalanine, tyrosine and tryptophan. Acts also as a flavin reductase (FR) able to generate reduced flavin mononucleotide in the presence of NADPH. The chain is Chorismate synthase aro-2 from Neurospora crassa (strain ATCC 24698 / 74-OR23-1A / CBS 708.71 / DSM 1257 / FGSC 987).